Here is a 248-residue protein sequence, read N- to C-terminus: Probable transcriptional regulatory protein BRADO1143 (248 aa).

Belongs to the TACO1 family.

It localises to the cytoplasm. This is Probable transcriptional regulatory protein BRADO1143 from Bradyrhizobium sp. (strain ORS 278).